The chain runs to 79 residues: Cytochrome b (79 aa).

Transmembrane regions (helical) follow at residues 1–7, 31–52, and 67–79; these read TALFLAM, WLIR…YLHI, and WNIG…LTMM. 2 residues coordinate heme b: His37 and His51.

This sequence belongs to the cytochrome b family. The cytochrome bc1 complex contains 3 respiratory subunits (MT-CYB, CYC1 and UQCRFS1), 2 core proteins (UQCRC1 and UQCRC2) and probably 6 low-molecular weight proteins. Heme b serves as cofactor.

It is found in the mitochondrion inner membrane. Component of the ubiquinol-cytochrome c reductase complex (complex III or cytochrome b-c1 complex) that is part of the mitochondrial respiratory chain. The b-c1 complex mediates electron transfer from ubiquinol to cytochrome c. Contributes to the generation of a proton gradient across the mitochondrial membrane that is then used for ATP synthesis. This is Cytochrome b (mt-cyb) from Julidochromis regani (Convict julie).